Consider the following 381-residue polypeptide: Ubiquitin-associated protein 1-like (381 aa).

One can recognise a UMA domain in the interval 4-50 (LDGVPFKLPKGFVIGTEPLPGPELSVPACGEVLLGSMHDFSLERTAL). Disordered regions lie at residues 87–141 (LAPA…PGRR) and 185–228 (SLCP…LRSH). The segment covering 95–104 (RDPEAGHQER) has biased composition (basic and acidic residues). Over residues 105-123 (PEEEGEDEAEASSGSEEEP) the composition is skewed to acidic residues. Positions 124–141 (APSSLQPGSPASPGPGRR) are enriched in low complexity. Pro residues predominate over residues 197-216 (ASPPGPAPQHPAAPASPPRP).

The polypeptide is Ubiquitin-associated protein 1-like (UBAP1L) (Homo sapiens (Human)).